The chain runs to 391 residues: S-adenosylmethionine synthase (391 aa).

His14 provides a ligand contact to ATP. Asp16 lines the Mg(2+) pocket. Glu42 contacts K(+). L-methionine-binding residues include Glu55 and Gln98. The interval 98–108 (QSVDIAIGVDE) is flexible loop. ATP contacts are provided by residues 172–174 (DGK), 238–239 (RF), Asp247, 253–254 (RK), Ala270, and Lys274. Asp247 contacts L-methionine. Position 278 (Lys278) interacts with L-methionine.

The protein belongs to the AdoMet synthase family. As to quaternary structure, homotetramer; dimer of dimers. The cofactor is Mg(2+). Requires K(+) as cofactor.

The protein localises to the cytoplasm. The enzyme catalyses L-methionine + ATP + H2O = S-adenosyl-L-methionine + phosphate + diphosphate. It functions in the pathway amino-acid biosynthesis; S-adenosyl-L-methionine biosynthesis; S-adenosyl-L-methionine from L-methionine: step 1/1. Its function is as follows. Catalyzes the formation of S-adenosylmethionine (AdoMet) from methionine and ATP. The overall synthetic reaction is composed of two sequential steps, AdoMet formation and the subsequent tripolyphosphate hydrolysis which occurs prior to release of AdoMet from the enzyme. This Clostridium botulinum (strain Okra / Type B1) protein is S-adenosylmethionine synthase.